Here is a 216-residue protein sequence, read N- to C-terminus: V-type ATP synthase subunit D (216 aa).

Belongs to the V-ATPase D subunit family.

In terms of biological role, produces ATP from ADP in the presence of a proton gradient across the membrane. The chain is V-type ATP synthase subunit D from Clostridium botulinum (strain ATCC 19397 / Type A).